The primary structure comprises 652 residues: MKKSKSKYLTLAGLVLGTGVLLSACGNSSTASKTYNYVYSSDPSSLNYLAENRAATSDIVANLVDGLLENDQYGNIIPSLAEDWTVSQDGLTYTYKLRKDAKWFTSEGEEYAPVTAQDFVTGLQYAADKKSEALYLVQDSVAGLDDYITGKTSDFSTVGVKALDDQTVQYTLVKPELYWNSKTLATILFPVNADFLKSKGDDFGKADPSSILYNGPFLMKALVSKSAIEYKKNPNYWDAKNVFVDDVKLTYYDGSDQESLERNFTAGAYTTARLFPNSSSYEGIKEKYKNNIIYSMQNSTSYFFNFNLDRKSYNYTSKTSDIEKKSTQEAVLNKNFRQAINFAFDRTSYGAQSEGKEGATKILRNLVVPPNFVSIKGKDFGEVVASKMVNYGKEWQGINFADGQDPYYNPEKAKAKFAEAKKELEAKGVQFPIHLDKTVEVTDKVGIQGVSSIKQSIESVLGSDNVVIDIQQLTSDEFDSSGYFAQTAAQKDYDLYHGGWGPDYQDPSTYLDIFNTNSGGFLQNLGLEPGEANDKAKAVGLDVYTQMLEEANKEQDPAKRYEKYADIQAWLIDSSLVLPSVSRGGTPSLRRTVPFAAAYGLTGTKGVESYKYLKVQDKIVTTDEYAKAREKWLKEKEESNKKAQEELAKHVK.

The signal sequence occupies residues 1–24 (MKKSKSKYLTLAGLVLGTGVLLSA). Cysteine 25 carries N-palmitoyl cysteine lipidation. Cysteine 25 is lipidated: S-diacylglycerol cysteine.

This sequence belongs to the bacterial solute-binding protein 5 family.

It is found in the cell membrane. Its function is as follows. Part of the binding-protein-dependent transport system for oligopeptides; probably an oligopeptide binding protein. This is Oligopeptide-binding protein AliB (aliB) from Streptococcus pneumoniae serotype 4 (strain ATCC BAA-334 / TIGR4).